Reading from the N-terminus, the 26-residue chain is Somatostatin-1 (26 aa).

Residues Cys-15 and Cys-26 are joined by a disulfide bond.

It belongs to the somatostatin family.

The protein resides in the secreted. Somatostatin inhibits the release of somatotropin. The protein is Somatostatin-1 (sst1) of Amia calva (Bowfin).